The following is a 315-amino-acid chain: Methionyl-tRNA formyltransferase (315 aa).

The interval 2–189 is N-terminal domain; the sequence is SDSLRIIFAG…LITTLKQLAD (188 aa). 113–116 lines the (6S)-5,6,7,8-tetrahydrofolate pocket; the sequence is SLLP. The interval 210-315 is C-terminal domain; it reads KEEARIDWSL…EWFIPGNRLA (106 aa).

Belongs to the Fmt family.

The catalysed reaction is L-methionyl-tRNA(fMet) + (6R)-10-formyltetrahydrofolate = N-formyl-L-methionyl-tRNA(fMet) + (6S)-5,6,7,8-tetrahydrofolate + H(+). In terms of biological role, attaches a formyl group to the free amino group of methionyl-tRNA(fMet). The formyl group appears to play a dual role in the initiator identity of N-formylmethionyl-tRNA by promoting its recognition by IF2 and preventing the misappropriation of this tRNA by the elongation apparatus. In Salmonella typhi, this protein is Methionyl-tRNA formyltransferase.